The sequence spans 1101 residues: Error-prone DNA polymerase (1101 aa).

A disordered region spans residues 1055–1101 (ADLGHPMDSAVGQTTPQTDSAPRPRPQPRAMHPREQAKRLFPSRDFH). Polar residues predominate over residues 1065 to 1074 (VGQTTPQTDS). The span at 1086–1101 (HPREQAKRLFPSRDFH) shows a compositional bias: basic and acidic residues.

Belongs to the DNA polymerase type-C family. DnaE2 subfamily.

The protein localises to the cytoplasm. It carries out the reaction DNA(n) + a 2'-deoxyribonucleoside 5'-triphosphate = DNA(n+1) + diphosphate. DNA polymerase involved in damage-induced mutagenesis and translesion synthesis (TLS). It is not the major replicative DNA polymerase. In Ruegeria pomeroyi (strain ATCC 700808 / DSM 15171 / DSS-3) (Silicibacter pomeroyi), this protein is Error-prone DNA polymerase.